The chain runs to 526 residues: Exodeoxyribonuclease 7 large subunit (526 aa).

Residues 496-526 form a disordered region; it reads GAMTTEGGTPPAGAKKRSAKPADPTKQGSLF.

This sequence belongs to the XseA family. Heterooligomer composed of large and small subunits.

It is found in the cytoplasm. It carries out the reaction Exonucleolytic cleavage in either 5'- to 3'- or 3'- to 5'-direction to yield nucleoside 5'-phosphates.. Bidirectionally degrades single-stranded DNA into large acid-insoluble oligonucleotides, which are then degraded further into small acid-soluble oligonucleotides. The chain is Exodeoxyribonuclease 7 large subunit from Rhizobium etli (strain CIAT 652).